Reading from the N-terminus, the 464-residue chain is Juvenile hormone epoxide hydrolase 1 (464 aa).

The helical transmembrane segment at 7-27 (MLIFAAIAGIAVLYYQITKEL) threads the bilayer. The Nucleophile role is filled by aspartate 224. Tyrosine 370 acts as the Proton donor in catalysis. Histidine 427 functions as the Proton acceptor in the catalytic mechanism.

Belongs to the peptidase S33 family. Developing oocytes, fat body and midgut epithelium of adults.

It localises to the microsome membrane. The protein localises to the endoplasmic reticulum membrane. It carries out the reaction cis-stilbene oxide + H2O = (1R,2R)-hydrobenzoin. The catalysed reaction is 1-(4-methoxyphenyl)-N-methyl-N-[(3-methyloxetan-3-yl)methyl]methanamine + H2O = 2-{[(4-methoxybenzyl)(methyl)amino]methyl}-2-methylpropane-1,3-diol. Its function is as follows. Catalyzes juvenile hormone hydrolysis. This Ctenocephalides felis (Cat flea) protein is Juvenile hormone epoxide hydrolase 1.